The sequence spans 87 residues: Large ribosomal subunit protein bL27 (87 aa).

The tract at residues 1–21 is disordered; that stretch reads MAHKKGGGSTRNGRDSASKRL.

The protein belongs to the bacterial ribosomal protein bL27 family.

This chain is Large ribosomal subunit protein bL27, found in Amoebophilus asiaticus (strain 5a2).